Here is a 433-residue protein sequence, read N- to C-terminus: Steroid hormone receptor ERR2 (433 aa).

The tract at residues 1–38 (MSSEDRHLGSSCGSFIKTEPSSPSSGIDALSHHSPSGS) is disordered. Residues 93–211 (YMLNAIPKRL…SPPAKKPLTK (119 aa)) are interaction with NANOG. The nuclear receptor DNA-binding region spans 100-186 (KRLCLVCGDI…RVRGGRQKYK (87 aa)). NR C4-type zinc fingers lie at residues 103–123 (CLVCGDIASGYHYGVASCEAC) and 139–163 (CPATNECEITKRRRKSCQACRFMKC). An essential for ESRRB transcriptional activity and interaction with NCOA3 region spans residues 203–433 (PPAKKPLTKI…LFLEMLEAKV (231 aa)). The 225-residue stretch at 208-432 (PLTKIVSNLL…KLFLEMLEAK (225 aa)) folds into the NR LBD domain.

The protein belongs to the nuclear hormone receptor family. NR3 subfamily. In terms of assembly, binds DNA as a monomer. Interacts with NR0B1; represses ESRRB activity at the GATA6 promoter. Interacts with NANOG; reciprocally modulates their transcriptional activities and activates POU5F1 expression. Interacts with NCOA3; mediates the interaction between ESRRB and RNA polymerase II complexes and allows NCOA3 corecruitment to ESRRB, KLF4, NANOG, and SOX2 enhancer regions to trigger ESRRB-dependent gene activation involved in self-renewal and pluripotency. Interacts with KDM1A; co-occupes the core set of ESRRB targets including ELF5 and EOMES. Interacts with the multiprotein complex Integrator, at least composed of INTS1, INTS2, INTS3, INTS4, INTS5, INTS6, INTS7, INTS8, INTS9/RC74, INTS10, INTS11/CPSF3L and INTS12; ESRRB is probably not a core component of the integrator complex and associates to integrator via its interaction with INTS1 and INTS9; attracts the transcriptional machinery. Interacts with JARID2. Interacts with POU5F1; recruits ESRRB near the POU5F1-SOX2 element in the NANOG proximal promoter leading to activation of NANOG expression; the interaction is DNA independent. Acetylated by PCAF/KAT2 (in vitro). Highly expressed in undifferentiated ESCs. Expressed in immature horizontal cells and in rod photoreceptors at intermediate and late stages of differentiation. Expressed in endolymph-producing epithelial cells.

It localises to the nucleus. Its subcellular location is the cytoplasm. The protein localises to the chromosome. Transcription factor that binds a canonical ESRRB recognition (ERRE) sequence 5'TCAAGGTCA-3' localized on promoter and enhancer of targets genes regulating their expression or their transcriptional activity. Plays a role, in a LIF-independent manner, in maintainance of self-renewal and pluripotency of embryonic and trophoblast stem cells through different signaling pathways including FGF signaling pathway and Wnt signaling pathways. Involved in morula development (2-16 cells embryos) by acting as a regulator at the 8-cell stage. Upon FGF signaling pathway activation, interacts with KDM1A by directly binding to enhancer site of ELF5 and EOMES and activating their transcription leading to self-renewal of trophoblast stem cells. Also regulates expression of multiple rod-specific genes and is required for survival of this cell type. Plays a role as transcription factor activator of GATA6, NR0B1, POU5F1 and PERM1. Plays a role as transcription factor repressor of NFE2L2 transcriptional activity and ESR1 transcriptional activity. During mitosis remains bound to a subset of interphase target genes, including pluripotency regulators, through the canonical ESRRB recognition (ERRE) sequence, leading to their transcriptional activation in early G1 phase. Can coassemble on structured DNA elements with other transcription factors like SOX2, POU5F1, KDM1A and NCOA3 to trigger ESRRB-dependent gene activation. This mechanism, in the case of SOX2 corecruitment prevents the embryonic stem cells (ESCs) to epiblast stem cells (EpiSC) transition through positive regulation of NR0B1 that inhibits the EpiSC transcriptional program. Also plays a role inner ear development by controlling expression of ion channels and transporters and in early placentation. This is Steroid hormone receptor ERR2 from Mus musculus (Mouse).